Consider the following 153-residue polypeptide: Aspartate carbamoyltransferase regulatory chain (153 aa).

Cysteine 110, cysteine 115, cysteine 138, and cysteine 141 together coordinate Zn(2+).

The protein belongs to the PyrI family. Contains catalytic and regulatory chains. The cofactor is Zn(2+).

Functionally, involved in allosteric regulation of aspartate carbamoyltransferase. This is Aspartate carbamoyltransferase regulatory chain from Bacteroides thetaiotaomicron (strain ATCC 29148 / DSM 2079 / JCM 5827 / CCUG 10774 / NCTC 10582 / VPI-5482 / E50).